A 204-amino-acid polypeptide reads, in one-letter code: Urease accessory protein UreG (204 aa).

12 to 19 (GPVGSGKT) contributes to the GTP binding site.

The protein belongs to the SIMIBI class G3E GTPase family. UreG subfamily. Homodimer. UreD, UreF and UreG form a complex that acts as a GTP-hydrolysis-dependent molecular chaperone, activating the urease apoprotein by helping to assemble the nickel containing metallocenter of UreC. The UreE protein probably delivers the nickel.

It localises to the cytoplasm. Facilitates the functional incorporation of the urease nickel metallocenter. This process requires GTP hydrolysis, probably effectuated by UreG. The chain is Urease accessory protein UreG from Ectopseudomonas mendocina (strain ymp) (Pseudomonas mendocina).